A 578-amino-acid chain; its full sequence is Arginine--tRNA ligase (578 aa).

The 'HIGH' region signature appears at 125 to 135 (PNVAKKMHVGH).

The protein belongs to the class-I aminoacyl-tRNA synthetase family. As to quaternary structure, monomer.

Its subcellular location is the cytoplasm. The enzyme catalyses tRNA(Arg) + L-arginine + ATP = L-arginyl-tRNA(Arg) + AMP + diphosphate. This chain is Arginine--tRNA ligase, found in Buchnera aphidicola subsp. Baizongia pistaciae (strain Bp).